A 579-amino-acid chain; its full sequence is MAAAAAALASSPMVHLTASRLRLPRPARSPAAATPSPSPASAACCSRGAACGLEWRPKSGLRALRRCEDRLRCFSIDGGGGGGGGGGGGTGGEDGEKRGEEEAAAAAEAKVGGAVEEMRSERTRSGSFSSSSSSSSGTPGISNEPPFLSFSVDNIDTVKLLELLGPEKVDSADVKAIKEKLFGYTTFWLTREEPFGDLGEGVLFIGNLRGKREEIFAKLQQQLRELTGDKYNLFMVEEPNSEGEDPRGGPRVSFGLLRREVSEPGPTTLWQYVISLLLFLLTVFSCVELGIASKISSLPPEIVTYFTDPNATGPPPDMQLLLPFVESALPVAYGVLAIQLFHEVGHFLAAFPKKVKLSIPFFIPNFTLGTFGAITQFKSILPDKKTMFDISMAGPLAGAALSFSMFSVGLLLSSNPAGASDLVEVPSKLFQGSLLLGLVSRATLGYRAMHAATVAIHPLVIAGWCGLTTTAFNMLPVGCLDGGRALQGAFGKDALFGFGLTTYSLLGLGVLGGPLSLPWGLYVLICQRTPEKPCLNDVSDVGTWRRAALIVSVFLVVLTLIPLWDELAEDLGVGLVTSF.

Disordered stretches follow at residues 1-42 and 78-146; these read MAAA…PASA and GGGG…NEPP. Residues 1 to 44 constitute a chloroplast transit peptide; sequence MAAAAAALASSPMVHLTASRLRLPRPARSPAAATPSPSPASAAC. Residues 16–42 show a composition bias toward low complexity; the sequence is LTASRLRLPRPARSPAAATPSPSPASA. Residues 78-92 show a composition bias toward gly residues; it reads GGGGGGGGGGGGTGG. 2 stretches are compositionally biased toward low complexity: residues 104 to 115 and 125 to 137; these read AAAAEAKVGGAV and SGSF…SSSG. Transmembrane regions (helical) follow at residues 272 to 292, 321 to 341, 357 to 377, 392 to 412, 419 to 439, 452 to 472, 505 to 525, and 547 to 567; these read YVIS…LGIA, LLPF…IQLF, LSIP…ITQF, MAGP…GLLL, ASDL…LGLV, ATVA…TTAF, LLGL…YVLI, and AALI…WDEL.

It belongs to the peptidase M50B family.

The protein resides in the plastid. The protein localises to the chloroplast membrane. Functionally, probable membrane-associated metalloprotease that may be involved in chloroplast development. The sequence is that of Probable zinc metalloprotease EGY1, chloroplastic (EGY1) from Oryza sativa subsp. japonica (Rice).